The following is a 361-amino-acid chain: Actin maturation protease (361 aa).

The interval 1-75 (MTSPCSFPLK…PPPPPLPSAV (75 aa)) is disordered. 2 stretches are compositionally biased toward pro residues: residues 24-33 (NIPPPLPLNP) and 52-72 (PLPPPPPPPAPPPPPPPPPLP). A peptidase C39-like region spans residues 134 to 254 (SCIQEGPQCG…WAVSAGVLIG (121 aa)). Cys142 is a catalytic residue.

It belongs to the ACTMAP family. Interacts (via N-terminus) with PFN2 isoforms 1/IIa and 2/IIb; the interactions may facilitate efficient cleavage of the acetylated N-terminus of immature actin. Interacts with PFN1.

Its subcellular location is the cytoplasm. The catalysed reaction is N-terminal N(alpha)-acetyl-L-methionyl-L-aspartyl-[protein] + H2O = N-terminal L-aspartyl-[protein] + N-acetyl-L-methionine. The enzyme catalyses N-terminal N(alpha)-acetyl-L-methionyl-L-glutamyl-[protein] + H2O = N-terminal L-glutamyl-[protein] + N-acetyl-L-methionine. It catalyses the reaction N-terminal N(alpha)-acetyl-L-cysteinyl-L-aspartyl-[protein] + H2O = N-terminal L-aspartyl-[protein] + N-acetyl-L-cysteine. It carries out the reaction N-terminal N(alpha)-acetyl-L-cysteinyl-L-glutamyl-[protein] + H2O = N-terminal L-glutamyl-[protein] + N-acetyl-L-cysteine. Actin maturation protease that specifically mediates the cleavage of immature acetylated N-terminal actin, thereby contributing to actin maturation. Cleaves N-terminal acetylated methionine of immature cytoplasmic beta- and gamma-actins Actb and Actg1 after translation. Cleaves N-terminal acetylated cysteine of muscle alpha-actins Acta1, Actc1 and Acta2 after canonical removal of N-terminal methionine. This Mus musculus (Mouse) protein is Actin maturation protease.